We begin with the raw amino-acid sequence, 177 residues long: Large ribosomal subunit protein uL10 (177 aa).

The protein belongs to the universal ribosomal protein uL10 family. Part of the ribosomal stalk of the 50S ribosomal subunit. The N-terminus interacts with L11 and the large rRNA to form the base of the stalk. The C-terminus forms an elongated spine to which L12 dimers bind in a sequential fashion forming a multimeric L10(L12)X complex.

Its function is as follows. Forms part of the ribosomal stalk, playing a central role in the interaction of the ribosome with GTP-bound translation factors. The chain is Large ribosomal subunit protein uL10 from Leptospira biflexa serovar Patoc (strain Patoc 1 / Ames).